The primary structure comprises 341 residues: S-adenosylmethionine:tRNA ribosyltransferase-isomerase (341 aa).

It belongs to the QueA family. As to quaternary structure, monomer.

It is found in the cytoplasm. The catalysed reaction is 7-aminomethyl-7-carbaguanosine(34) in tRNA + S-adenosyl-L-methionine = epoxyqueuosine(34) in tRNA + adenine + L-methionine + 2 H(+). It participates in tRNA modification; tRNA-queuosine biosynthesis. Transfers and isomerizes the ribose moiety from AdoMet to the 7-aminomethyl group of 7-deazaguanine (preQ1-tRNA) to give epoxyqueuosine (oQ-tRNA). The protein is S-adenosylmethionine:tRNA ribosyltransferase-isomerase of Clostridium botulinum (strain Langeland / NCTC 10281 / Type F).